Consider the following 1222-residue polypeptide: Protein SCP160 (1222 aa).

Residues 1 to 12 show a composition bias toward polar residues; the sequence is MSEEQTAIDSPP. Residues 1–59 are disordered; the sequence is MSEEQTAIDSPPSTVEGSVETVTTIDSPSTTASTIAATAEEHPQLEKKPTPLPSLKDLP. The span at 13–38 shows a compositional bias: low complexity; the sequence is STVEGSVETVTTIDSPSTTASTIAAT. Basic and acidic residues predominate over residues 39–49; the sequence is AEEHPQLEKKP. A Phosphothreonine modification is found at Thr50. Residues Ser54, Ser63, Ser85, Ser87, and Ser89 each carry the phosphoserine modification. Residues 79–98 are disordered; that stretch reads KPAVSNSPSPSPSAPSLTTG. The region spanning 177–249 is the KH 1 domain; it reads PINAVIEVPS…ESVNLAKAKI (73 aa). Ser630 bears the Phosphoserine mark. 5 consecutive KH domains span residues 634–702, 712–771, 782–851, 861–929, and 939–1001; these read KSKM…KKYL, IITK…HEEL, GHKM…AKRV, FVTE…VEEI, and SVTK…EKKI. At Ser1112 the chain carries Phosphoserine. The KH 7 domain occupies 1153–1216; that stretch reads YAGYVWGADT…AGVEKAGEMV (64 aa).

It localises to the endoplasmic reticulum membrane. It is found in the nucleus membrane. In terms of biological role, involved in the control of mitotic chromosome transmission. Required during cell division for faithful partitioning of the ER-nuclear envelope membranes which, in S.cerevisiae, enclose the duplicated chromosomes. This is Protein SCP160 (SCP160) from Saccharomyces cerevisiae (strain ATCC 204508 / S288c) (Baker's yeast).